Here is a 2555-residue protein sequence, read N- to C-terminus: Neurogenic locus notch homolog protein 1 (2555 aa).

The N-terminal stretch at 1 to 18 is a signal peptide; it reads MPPLLAPLLCLALLPALA. Over 19 to 1735 the chain is Extracellular; that stretch reads ARGPRCSQPG…VEPPPPAQLH (1717 aa). EGF-like domains lie at 20 to 58, 59 to 99, 102 to 139, and 140 to 176; these read RGPR…PRCQ, DPNP…PLCL, LDNA…KSCQ, and QADP…PTCR. Disulfide bonds link cysteine 24/cysteine 37, cysteine 31/cysteine 46, cysteine 48/cysteine 57, cysteine 63/cysteine 74, cysteine 68/cysteine 87, cysteine 89/cysteine 98, cysteine 106/cysteine 117, cysteine 111/cysteine 127, cysteine 129/cysteine 138, cysteine 144/cysteine 155, cysteine 149/cysteine 164, cysteine 166/cysteine 175, cysteine 182/cysteine 195, cysteine 189/cysteine 204, cysteine 206/cysteine 215, cysteine 222/cysteine 233, cysteine 227/cysteine 243, cysteine 245/cysteine 254, cysteine 261/cysteine 272, cysteine 266/cysteine 281, cysteine 283/cysteine 292, cysteine 299/cysteine 312, cysteine 306/cysteine 321, cysteine 323/cysteine 332, cysteine 339/cysteine 350, cysteine 344/cysteine 359, cysteine 361/cysteine 370, cysteine 376/cysteine 387, cysteine 381/cysteine 398, cysteine 400/cysteine 409, cysteine 416/cysteine 429, cysteine 423/cysteine 438, and cysteine 440/cysteine 449. The N-linked (GlcNAc...) asparagine glycan is linked to asparagine 41. An O-linked (Glc...) serine glycan is attached at serine 65. Residue threonine 73 is glycosylated (O-linked (Fuc...) threonine). O-linked (Fuc...) threonine glycosylation is present at threonine 116. Residue serine 146 is glycosylated (O-linked (Glc...) serine). An EGF-like 5; calcium-binding domain is found at 178-216; that stretch reads DVNECGQKPGLCRHGGTCHNEVGSYRCVCRATHTGPNCE. The O-linked (Fuc...) threonine glycan is linked to threonine 194. An EGF-like 6 domain is found at 218 to 255; it reads PYVPCSPSPCQNGGTCRPTGDVTHECACLPGFTGQNCE. The O-linked (Fuc...) threonine; alternate glycan is linked to threonine 232. O-linked (GalNAc...) threonine; alternate glycosylation occurs at threonine 232. The region spanning 257–293 is the EGF-like 7; calcium-binding domain; it reads NIDDCPGNNCKNGGACVDGVNTYNCRCPPEWTGQYCT. One can recognise an EGF-like 8; calcium-binding domain in the interval 295–333; sequence DVDECQLMPNACQNGGTCHNTHGGYNCVCVNGWTGEDCS. O-linked (Fuc...) threonine glycosylation is present at threonine 311. Residues 335–371 enclose the EGF-like 9; calcium-binding domain; the sequence is NIDDCASAACFHGATCHDRVASFYCECPHGRTGLLCH. Serine 341 carries an O-linked (Glc...) serine glycan. O-linked (Fuc...) threonine glycosylation occurs at threonine 349. The region spanning 372-410 is the EGF-like 10 domain; the sequence is LNDACISNPCNEGSNCDTNPVNGKAICTCPSGYTGPACS. The O-linked (Glc...) serine glycan is linked to serine 378. The region spanning 412–450 is the EGF-like 11; calcium-binding domain; it reads DVDECSLGANPCEHAGKCINTLGSFECQCLQGYTGPRCE. Positions 420–421 are interaction with DLL4; it reads AN. Residues threonine 432 and serine 435 each coordinate Ca(2+). O-linked (Glc...) serine glycosylation is present at serine 435. Positions 448 to 452 are interaction with DLL4; that stretch reads RCEID. Aspartate 452, valine 453, and glutamate 455 together coordinate Ca(2+). An EGF-like 12; calcium-binding domain is found at 452–488; sequence DVNECVSNPCQNDATCLDQIGEFQCICMPGYEGVHCE. Intrachain disulfides connect cysteine 456-cysteine 467, cysteine 461-cysteine 476, and cysteine 478-cysteine 487. O-linked (Glc...) serine glycosylation occurs at serine 458. The O-linked (Fuc...) threonine glycan is linked to threonine 466. Aspartate 469 and glutamine 470 together coordinate Ca(2+). Ca(2+) is bound by residues asparagine 490, threonine 491, and glutamate 493. Positions 490–526 constitute an EGF-like 13; calcium-binding domain; sequence NTDECASSPCLHNGRCLDKINEFQCECPTGFTGHLCQ. Intrachain disulfides connect cysteine 494-cysteine 505, cysteine 499-cysteine 514, cysteine 516-cysteine 525, cysteine 532-cysteine 543, cysteine 537-cysteine 552, cysteine 554-cysteine 563, cysteine 570-cysteine 580, cysteine 575-cysteine 589, cysteine 591-cysteine 600, cysteine 607-cysteine 618, cysteine 612-cysteine 627, cysteine 629-cysteine 638, cysteine 645-cysteine 655, cysteine 650-cysteine 664, cysteine 666-cysteine 675, cysteine 682-cysteine 693, cysteine 687-cysteine 702, cysteine 704-cysteine 713, cysteine 720-cysteine 730, cysteine 725-cysteine 739, cysteine 741-cysteine 750, cysteine 757-cysteine 768, cysteine 762-cysteine 777, cysteine 779-cysteine 788, cysteine 795-cysteine 806, cysteine 800-cysteine 815, cysteine 817-cysteine 826, cysteine 833-cysteine 844, cysteine 838-cysteine 855, cysteine 857-cysteine 866, cysteine 873-cysteine 884, cysteine 878-cysteine 893, cysteine 895-cysteine 904, cysteine 911-cysteine 922, cysteine 916-cysteine 931, cysteine 933-cysteine 942, cysteine 949-cysteine 960, cysteine 954-cysteine 969, cysteine 971-cysteine 980, cysteine 987-cysteine 998, cysteine 992-cysteine 1007, cysteine 1009-cysteine 1018, cysteine 1025-cysteine 1036, cysteine 1030-cysteine 1045, cysteine 1047-cysteine 1056, cysteine 1063-cysteine 1074, cysteine 1068-cysteine 1083, cysteine 1085-cysteine 1094, cysteine 1101-cysteine 1122, cysteine 1116-cysteine 1131, cysteine 1133-cysteine 1142, cysteine 1149-cysteine 1160, cysteine 1154-cysteine 1169, cysteine 1171-cysteine 1180, cysteine 1187-cysteine 1198, cysteine 1192-cysteine 1207, cysteine 1209-cysteine 1218, cysteine 1238-cysteine 1253, cysteine 1255-cysteine 1264, cysteine 1271-cysteine 1284, cysteine 1276-cysteine 1293, cysteine 1295-cysteine 1304, cysteine 1311-cysteine 1322, cysteine 1316-cysteine 1334, cysteine 1336-cysteine 1345, cysteine 1352-cysteine 1363, cysteine 1357-cysteine 1372, cysteine 1374-cysteine 1383, cysteine 1391-cysteine 1403, cysteine 1397-cysteine 1414, cysteine 1416-cysteine 1425, cysteine 1449-cysteine 1472, cysteine 1454-cysteine 1467, and cysteine 1463-cysteine 1479. O-linked (Glc...) serine glycosylation is present at serine 496. The Ca(2+) site is built by aspartate 507 and lysine 508. Positions 528 to 564 constitute an EGF-like 14; calcium-binding domain; that stretch reads DVDECASTPCKNGAKCLDGPNTYTCVCTEGYTGTHCE. Serine 534 carries an O-linked (Glc...) serine glycan. The EGF-like 15; calcium-binding domain occupies 566-601; that stretch reads DIDECDPDPCHYGSCKDGVATFTCLCRPGYTGHHCE. The region spanning 603–639 is the EGF-like 16; calcium-binding domain; sequence NINECSSQPCRHGGTCQDRDNAYLCFCLKGTTGPNCE. A glycan (O-linked (Glc...) serine) is linked at serine 609. An O-linked (Fuc...) threonine glycan is attached at threonine 617. One can recognise an EGF-like 17; calcium-binding domain in the interval 641 to 676; it reads NLDDCASSPCDSGTCLDKIDGYECACEPGYTGSMCN. O-linked (Glc...) serine glycosylation is present at serine 647. The EGF-like 18; calcium-binding domain maps to 678 to 714; it reads NIDECAGNPCHNGGTCEDGINGFTCRCPEGYHDPTCL. The O-linked (Fuc...) threonine glycan is linked to threonine 692. One can recognise an EGF-like 19; calcium-binding domain in the interval 716–751; it reads EVNECNSNPCVHGACRDSLNGYKCDCDPGWSGTNCD. Residue serine 722 is glycosylated (O-linked (Glc...) serine). The EGF-like 20 domain maps to 753 to 789; that stretch reads NNNECESNPCVNGGTCKDMTSGYVCTCREGFSGPNCQ. Residue serine 759 is glycosylated (O-linked (Glc...) serine). Threonine 767 is a glycosylation site (O-linked (Fuc...) threonine). The O-linked (GlcNAc) serine glycan is linked to serine 784. The 37-residue stretch at 791 to 827 folds into the EGF-like 21; calcium-binding domain; that stretch reads NINECASNPCLNQGTCIDDVAGYKCNCLLPYTGATCE. O-linked (Glc...) serine glycosylation is present at serine 797. Threonine 805 carries O-linked (Fuc...) threonine glycosylation. Residues 829–867 form the EGF-like 22 domain; the sequence is VLAPCAPSPCRNGGECRQSEDYESFSCVCPTGWQGQTCE. In terms of domain architecture, EGF-like 23; calcium-binding spans 869–905; sequence DINECVLSPCRHGASCQNTHGGYRCHCQAGYSGRNCE. Residues 907–943 form the EGF-like 24 domain; the sequence is DIDDCRPNPCHNGGSCTDGINTAFCDCLPGFRGTFCE. Serine 921 carries an O-linked (Fuc) serine glycan. The 37-residue stretch at 945–981 folds into the EGF-like 25; calcium-binding domain; it reads DINECASDPCRNGANCTDCVDSYTCTCPAGFSGIHCE. Serine 951 carries an O-linked (Glc...) serine glycan. Asparagine 959 carries N-linked (GlcNAc...) asparagine glycosylation. 5 consecutive EGF-like domains span residues 983 to 1019, 1021 to 1057, 1059 to 1095, 1097 to 1143, and 1145 to 1181; these read NTPD…SYCQ, DVNE…PNCQ, LVHW…LYCD, PSVS…SYCE, and LVDE…VNCS. An O-linked (Fuc...) threonine glycan is attached at threonine 997. Serine 1027 carries O-linked (Glc...) serine glycosylation. Threonine 1035 is a glycosylation site (O-linked (Fuc...) threonine). A glycan (O-linked (Glc...) serine) is linked at serine 1065. Threonine 1159 carries O-linked (Fuc...) threonine glycosylation. N-linked (GlcNAc...) asparagine glycosylation occurs at asparagine 1179. Residues 1183–1219 enclose the EGF-like 31; calcium-binding domain; that stretch reads EIDECLSHPCQNGGTCLDLPNTYKCSCPRGTQGVHCE. Serine 1189 is a glycosylation site (O-linked (Glc...) serine). Threonine 1197 is a glycosylation site (O-linked (Fuc...) threonine). Residues 1221–1265 enclose the EGF-like 32; calcium-binding domain; that stretch reads NVDDCNPPVDPVSRSPKCFNNGTCVDQVGGYSCTCPPGFVGERCE. Asparagine 1241 is a glycosylation site (N-linked (GlcNAc...) asparagine). EGF-like domains lie at 1267 to 1305, 1307 to 1346, 1348 to 1384, and 1387 to 1426; these read DVNE…RRCE, VING…ATCE, DART…PECQ, and ASSP…LLCH. O-linked (Glc...) serine glycosylation is present at serine 1273. Threonine 1362 is a glycosylation site (O-linked (Fuc...) threonine). Threonine 1379 carries an O-linked (GlcNAc...) threonine glycan. Threonine 1402 carries O-linked (Fuc...) threonine; alternate glycosylation. Residue threonine 1402 is glycosylated (O-linked (GalNAc...) threonine; alternate). LNR repeat units lie at residues 1449–1489, 1490–1531, and 1532–1571; these read CELP…PWKN, CTQS…CNPL, and YDQY…RLAA. Ca(2+)-binding residues include aspartate 1457, asparagine 1460, aspartate 1475, and aspartate 1478. N-linked (GlcNAc...) asparagine glycosylation occurs at asparagine 1489. Cystine bridges form between cysteine 1490–cysteine 1514, cysteine 1496–cysteine 1509, cysteine 1505–cysteine 1521, cysteine 1536–cysteine 1549, and cysteine 1545–cysteine 1561. An N-linked (GlcNAc...) asparagine glycan is attached at asparagine 1587. Threonine 1725 carries an O-linked (GalNAc...) threonine glycan. Positions 1728-1760 are interaction with PSEN1; it reads PPPPAQLHFMYVAAAAFVLLFFVGCGVLLSRKR. The helical transmembrane segment at 1736-1756 threads the bilayer; that stretch reads FMYVAAAAFVLLFFVGCGVLL. Residues 1757-2555 lie on the Cytoplasmic side of the membrane; sequence SRKRRRQHGQ…QIARIPEAFK (799 aa). A Glycyl lysine isopeptide (Lys-Gly) (interchain with G-Cter in ubiquitin) cross-link involves residue lysine 1759. Residues 1780–1808 form a disordered region; the sequence is KKKRREPLGEDSVGLKPLKNASDGALMDD. Threonine 1861 bears the Phosphothreonine mark. ANK repeat units lie at residues 1927–1956, 1960–1990, 1994–2023, 2027–2056, 2060–2089, and 2095–2122; these read TGET…DANI, MGRT…DLDA, DGTT…DVNA, LGKS…NKDM, REET…NRDI, and RLPR…VRSP. The interval 1947–1955 is HIF1AN-binding; the sequence is LLEASADAN. Residue asparagine 1955 is modified to (3S)-3-hydroxyasparagine; by HIF1AN; partial. Residues 2014–2022 form an HIF1AN-binding region; sequence LINSHADVN. (3S)-3-hydroxyasparagine; by HIF1AN is present on asparagine 2022. Disordered regions lie at residues 2151–2194, 2379–2447, and 2483–2555; these read PGVQ…LDSS, LVQT…QPLG, and TPPS…EAFK. The segment covering 2379–2408 has biased composition (low complexity); that stretch reads LVQTQQVQPQNLQMQQQNLQPANIQQQQSL. Residues 2483–2502 are compositionally biased toward polar residues; it reads TPPSQHSYSSPVDNTPSHQL. Over residues 2512-2527 the composition is skewed to low complexity; sequence PSPESPDQWSSSSPHS. Positions 2528 to 2547 are enriched in polar residues; the sequence is NVSDWSEGVSSPPTSMQSQI.

The protein belongs to the NOTCH family. In terms of assembly, heterodimer of a C-terminal fragment N(TM) and an N-terminal fragment N(EC) which are probably linked by disulfide bonds. Interacts with DNER, DTX1, DTX2 and RBPJ/RBPSUH. Also interacts with MAML1, MAML2 and MAML3 which act as transcriptional coactivators for NOTCH1. The NOTCH1 intracellular domain interacts with SNW1; the interaction involves multimerized NOTCH1 NICD and is implicated in a formation of an intermediate preactivation complex which associates with DNA-bound CBF-1/RBPJ. The activated membrane-bound form interacts with AAK1 which promotes NOTCH1 stabilization. Forms a trimeric complex with FBXW7 and SGK1. Interacts with HIF1AN. HIF1AN negatively regulates the function of notch intracellular domain (NICD), accelerating myogenic differentiation. Interacts (via NICD) with SNAI1 (via zinc fingers); the interaction induces SNAI1 degradation via MDM2-mediated ubiquitination and inhibits SNAI1-induced cell invasion. Interacts (via NICD) with MDM2A. Interacts (via NICD) with BCL6; the interaction decreases MAML1 recruitment by NOTCH1 NICD on target genes DNA and inhibits NOTCH1 transactivation activity. Interacts with THBS4. Interacts (via the EGF-like repeat region) with CCN3 (via CTCK domain). Interacts (via EGF-like domains) with DLL4 (via N-terminal DSL and MNNL domains). Interacts with ZMIZ1. Interacts (via NICD domain) with MEGF10 (via the cytoplasmic domain). Interacts with DLL1 and JAG1. Interacts (via NICD domain) with PRAG1. Forms a complex with PRAG1, N1ICD and MAML1, in a MAML1-dependent manner. Interacts (via transmembrane region) with PSEN1; the interaction is direct. Interacts with ZFP64. In terms of processing, synthesized in the endoplasmic reticulum as an inactive form which is proteolytically cleaved by a furin-like convertase in the trans-Golgi network before it reaches the plasma membrane to yield an active, ligand-accessible form. Cleavage results in a C-terminal fragment N(TM) and a N-terminal fragment N(EC). Following ligand binding, it is cleaved by ADAM17 to yield a membrane-associated intermediate fragment called notch extracellular truncation (NEXT). Following endocytosis, this fragment is then cleaved by one of the catalytic subunits of gamma-secretase (PSEN1 or PSEN2), to release a Notch-derived peptide containing the intracellular domain (NICD) from the membrane. Post-translationally, phosphorylated. O-glycosylated on the EGF-like domains. O-glucosylated at Ser-435 by KDELC1 and KDELC2. Contains both O-linked fucose and O-linked glucose in the EGF-like domains 11, 12 and 13, which are interacting with the residues on DLL4. O-linked glycosylation by GALNT11 is involved in determination of left/right symmetry: glycosylation promotes activation of NOTCH1, possibly by promoting cleavage by ADAM17, modulating the balance between motile and immotile (sensory) cilia at the left-right organiser (LRO). MFNG-, RFNG- and LFNG-mediated modification of O-fucose residues at specific EGF-like domains results in inhibition of its activation by JAG1 and enhancement of its activation by DLL1 via an increased binding to DLL1. In terms of processing, ubiquitinated. Undergoes 'Lys-29'-linked polyubiquitination by ITCH; promotes the lysosomal degradation of non-activated internalized NOTCH1. Deubiquitination by USP12 is required for transport of internalized non-activated receptor from late endosomes to lysosomes for degradation. Monoubiquitination at Lys-1759 is required for activation by gamma-secretase cleavage, it promotes interaction with AAK1, which stabilizes it. Deubiquitination by EIF3F is necessary for nuclear import of activated Notch. Post-translationally, hydroxylated at Asn-1955 by HIF1AN. Hydroxylated at Asn-2022 by HIF1AN. Hydroxylation reduces affinity for HI1AN and may thus indirectly modulate negative regulation of NICD. In fetal tissues most abundant in spleen, brain stem and lung. Also present in most adult tissues where it is found mainly in lymphoid tissues.

Its subcellular location is the cell membrane. The protein resides in the late endosome membrane. It is found in the nucleus. Functionally, functions as a receptor for membrane-bound ligands Jagged-1 (JAG1), Jagged-2 (JAG2) and Delta-1 (DLL1) to regulate cell-fate determination. Upon ligand activation through the released notch intracellular domain (NICD) it forms a transcriptional activator complex with RBPJ/RBPSUH and activates genes of the enhancer of split locus. Affects the implementation of differentiation, proliferation and apoptotic programs. Involved in angiogenesis; negatively regulates endothelial cell proliferation and migration and angiogenic sprouting. Involved in the maturation of both CD4(+) and CD8(+) cells in the thymus. Important for follicular differentiation and possibly cell fate selection within the follicle. During cerebellar development, functions as a receptor for neuronal DNER and is involved in the differentiation of Bergmann glia. Represses neuronal and myogenic differentiation. May play an essential role in postimplantation development, probably in some aspect of cell specification and/or differentiation. May be involved in mesoderm development, somite formation and neurogenesis. May enhance HIF1A function by sequestering HIF1AN away from HIF1A. Required for the THBS4 function in regulating protective astrogenesis from the subventricular zone (SVZ) niche after injury. Involved in determination of left/right symmetry by modulating the balance between motile and immotile (sensory) cilia at the left-right organiser (LRO). This chain is Neurogenic locus notch homolog protein 1 (NOTCH1), found in Homo sapiens (Human).